The chain runs to 125 residues: Small ribosomal subunit protein uS12 (125 aa).

Asp-89 bears the 3-methylthioaspartic acid mark. A disordered region spans residues 101-125; that stretch reads SLDTAGVKDRKQSRSKYGAKRPKKA. Basic residues predominate over residues 113-125; that stretch reads SRSKYGAKRPKKA.

It belongs to the universal ribosomal protein uS12 family. As to quaternary structure, part of the 30S ribosomal subunit. Contacts proteins S8 and S17. May interact with IF1 in the 30S initiation complex.

Its function is as follows. With S4 and S5 plays an important role in translational accuracy. In terms of biological role, interacts with and stabilizes bases of the 16S rRNA that are involved in tRNA selection in the A site and with the mRNA backbone. Located at the interface of the 30S and 50S subunits, it traverses the body of the 30S subunit contacting proteins on the other side and probably holding the rRNA structure together. The combined cluster of proteins S8, S12 and S17 appears to hold together the shoulder and platform of the 30S subunit. This is Small ribosomal subunit protein uS12 from Thiobacillus denitrificans (strain ATCC 25259 / T1).